Consider the following 283-residue polypeptide: ATP phosphoribosyltransferase (283 aa).

The protein belongs to the ATP phosphoribosyltransferase family. Long subfamily. Mg(2+) is required as a cofactor.

The protein resides in the cytoplasm. The enzyme catalyses 1-(5-phospho-beta-D-ribosyl)-ATP + diphosphate = 5-phospho-alpha-D-ribose 1-diphosphate + ATP. Its pathway is amino-acid biosynthesis; L-histidine biosynthesis; L-histidine from 5-phospho-alpha-D-ribose 1-diphosphate: step 1/9. Feedback inhibited by histidine. In terms of biological role, catalyzes the condensation of ATP and 5-phosphoribose 1-diphosphate to form N'-(5'-phosphoribosyl)-ATP (PR-ATP). Has a crucial role in the pathway because the rate of histidine biosynthesis seems to be controlled primarily by regulation of HisG enzymatic activity. The chain is ATP phosphoribosyltransferase from Bacteroides fragilis (strain ATCC 25285 / DSM 2151 / CCUG 4856 / JCM 11019 / LMG 10263 / NCTC 9343 / Onslow / VPI 2553 / EN-2).